We begin with the raw amino-acid sequence, 702 residues long: Threonine--tRNA ligase (702 aa).

Residues 1–30 (MSAPVHPVPGADGGDPLRPATPGLRSPQVP) are disordered. The TGS domain occupies 15-84 (DPLRPATPGL…DVDVEVTPVP (70 aa)). Residues 279–585 (DHRKLGIELD…LTEHYAGAFP (307 aa)) form a catalytic region. Zn(2+) is bound by residues C384, H435, and H562.

Belongs to the class-II aminoacyl-tRNA synthetase family. In terms of assembly, homodimer. Zn(2+) serves as cofactor.

The protein resides in the cytoplasm. It catalyses the reaction tRNA(Thr) + L-threonine + ATP = L-threonyl-tRNA(Thr) + AMP + diphosphate + H(+). Functionally, catalyzes the attachment of threonine to tRNA(Thr) in a two-step reaction: L-threonine is first activated by ATP to form Thr-AMP and then transferred to the acceptor end of tRNA(Thr). Also edits incorrectly charged L-seryl-tRNA(Thr). This chain is Threonine--tRNA ligase, found in Mycobacterium leprae (strain Br4923).